The chain runs to 528 residues: Phosphoenolpyruvate carboxykinase (ATP) (528 aa).

Substrate is bound by residues R56, Y192, and K198. Residues K198, H217, and 233 to 241 (GLSGTGKTT) contribute to the ATP site. Mn(2+) contacts are provided by K198 and H217. D254 lines the Mn(2+) pocket. E282, R319, and T444 together coordinate ATP. Residue R319 participates in substrate binding.

It belongs to the phosphoenolpyruvate carboxykinase (ATP) family. Mn(2+) serves as cofactor.

The protein resides in the cytoplasm. It carries out the reaction oxaloacetate + ATP = phosphoenolpyruvate + ADP + CO2. It participates in carbohydrate biosynthesis; gluconeogenesis. Its function is as follows. Involved in the gluconeogenesis. Catalyzes the conversion of oxaloacetate (OAA) to phosphoenolpyruvate (PEP) through direct phosphoryl transfer between the nucleoside triphosphate and OAA. The sequence is that of Phosphoenolpyruvate carboxykinase (ATP) from Bacillus cereus (strain 03BB102).